A 449-amino-acid chain; its full sequence is Phosphoglucosamine mutase (449 aa).

Ser100 acts as the Phosphoserine intermediate in catalysis. 4 residues coordinate Mg(2+): Ser100, Asp241, Asp243, and Asp245. Ser100 carries the phosphoserine modification.

It belongs to the phosphohexose mutase family. Requires Mg(2+) as cofactor. In terms of processing, activated by phosphorylation.

The catalysed reaction is alpha-D-glucosamine 1-phosphate = D-glucosamine 6-phosphate. Catalyzes the conversion of glucosamine-6-phosphate to glucosamine-1-phosphate. The protein is Phosphoglucosamine mutase of Caldicellulosiruptor saccharolyticus (strain ATCC 43494 / DSM 8903 / Tp8T 6331).